Here is a 321-residue protein sequence, read N- to C-terminus: Anthranilate phosphoribosyltransferase (321 aa).

5-phospho-alpha-D-ribose 1-diphosphate contacts are provided by residues G72, 75-76 (GD), T80, 82-85 (NVST), 99-107 (KHGNVSITS), and S111. G72 provides a ligand contact to anthranilate. A Mg(2+)-binding site is contributed by S84. N102 contacts anthranilate. Residue R157 coordinates anthranilate. Residues D216 and E217 each coordinate Mg(2+).

The protein belongs to the anthranilate phosphoribosyltransferase family. As to quaternary structure, homodimer. Mg(2+) serves as cofactor.

It carries out the reaction N-(5-phospho-beta-D-ribosyl)anthranilate + diphosphate = 5-phospho-alpha-D-ribose 1-diphosphate + anthranilate. Its pathway is amino-acid biosynthesis; L-tryptophan biosynthesis; L-tryptophan from chorismate: step 2/5. Its function is as follows. Catalyzes the transfer of the phosphoribosyl group of 5-phosphorylribose-1-pyrophosphate (PRPP) to anthranilate to yield N-(5'-phosphoribosyl)-anthranilate (PRA). This chain is Anthranilate phosphoribosyltransferase, found in Methanococcus maripaludis (strain C5 / ATCC BAA-1333).